The primary structure comprises 388 residues: Succinate--CoA ligase [ADP-forming] subunit beta (388 aa).

Residues 9-245 (KELLASYGLP…KSQENERELK (237 aa)) enclose the ATP-grasp domain. ATP-binding positions include Lys-46, 53–55 (GRG), Glu-100, Tyr-103, and Glu-108. Asn-200 and Asp-214 together coordinate Mg(2+). Residues Asn-265 and 322–324 (GIV) each bind substrate.

This sequence belongs to the succinate/malate CoA ligase beta subunit family. Heterotetramer of two alpha and two beta subunits. Mg(2+) serves as cofactor.

The catalysed reaction is succinate + ATP + CoA = succinyl-CoA + ADP + phosphate. It catalyses the reaction GTP + succinate + CoA = succinyl-CoA + GDP + phosphate. The protein operates within carbohydrate metabolism; tricarboxylic acid cycle; succinate from succinyl-CoA (ligase route): step 1/1. In terms of biological role, succinyl-CoA synthetase functions in the citric acid cycle (TCA), coupling the hydrolysis of succinyl-CoA to the synthesis of either ATP or GTP and thus represents the only step of substrate-level phosphorylation in the TCA. The beta subunit provides nucleotide specificity of the enzyme and binds the substrate succinate, while the binding sites for coenzyme A and phosphate are found in the alpha subunit. The polypeptide is Succinate--CoA ligase [ADP-forming] subunit beta (Neisseria gonorrhoeae (strain ATCC 700825 / FA 1090)).